We begin with the raw amino-acid sequence, 319 residues long: Ribonuclease Z (319 aa).

The Zn(2+) site is built by H62, H64, D66, H67, H139, D209, and H268. The active-site Proton acceptor is D66.

This sequence belongs to the RNase Z family. In terms of assembly, homodimer. It depends on Zn(2+) as a cofactor.

It catalyses the reaction Endonucleolytic cleavage of RNA, removing extra 3' nucleotides from tRNA precursor, generating 3' termini of tRNAs. A 3'-hydroxy group is left at the tRNA terminus and a 5'-phosphoryl group is left at the trailer molecule.. Functionally, zinc phosphodiesterase, which displays some tRNA 3'-processing endonuclease activity. Probably involved in tRNA maturation, by removing a 3'-trailer from precursor tRNA. This Pseudomonas putida (strain GB-1) protein is Ribonuclease Z.